The chain runs to 78 residues: Leukemia-associated protein 1 (78 aa).

Functionally, may act as a tumor suppressor. The chain is Leukemia-associated protein 1 (DLEU1) from Homo sapiens (Human).